Consider the following 472-residue polypeptide: Glutamate--tRNA ligase 1 (472 aa).

A 'HIGH' region motif is present at residues proline 9–asparagine 19. The span at alanine 112–serine 131 shows a compositional bias: basic and acidic residues. Residues alanine 112–alanine 133 are disordered. A 'KMSKS' region motif is present at residues lysine 238 to arginine 242. Lysine 241 provides a ligand contact to ATP.

The protein belongs to the class-I aminoacyl-tRNA synthetase family. Glutamate--tRNA ligase type 1 subfamily. As to quaternary structure, monomer.

It localises to the cytoplasm. It carries out the reaction tRNA(Glu) + L-glutamate + ATP = L-glutamyl-tRNA(Glu) + AMP + diphosphate. In terms of biological role, catalyzes the attachment of glutamate to tRNA(Glu) in a two-step reaction: glutamate is first activated by ATP to form Glu-AMP and then transferred to the acceptor end of tRNA(Glu). This chain is Glutamate--tRNA ligase 1, found in Gluconobacter oxydans (strain 621H) (Gluconobacter suboxydans).